A 289-amino-acid polypeptide reads, in one-letter code: Ferri-bacillibactin esterase BesA (289 aa).

Catalysis depends on charge relay system residues S163, E225, and H263.

This sequence belongs to the esterase D family.

It localises to the cytoplasm. Its function is as follows. Catalyzes the hydrolysis of the trilactone cycle of ferri-bacillibactin (ferri-BB) complex, leading to the formation of bacillibactin monomers and to cytosolic iron release, thus making iron available for metabolic use. Can also hydrolyze bacillibactin (BB), however the catalytic efficiency for ferri-BB hydrolysis is much higher than for BB. This Bacillus subtilis (strain 168) protein is Ferri-bacillibactin esterase BesA (besA).